Here is a 296-residue protein sequence, read N- to C-terminus: uncharacterized protein (296 aa).

The signal sequence occupies residues 1–20 (MRKFIFVLLTLLLVSPFSFA).

This is an uncharacterized protein from Escherichia coli (strain K12).